We begin with the raw amino-acid sequence, 205 residues long: MPSKKKKYNARFPPARIKKIMQTDEEIGKVAAAVPVIISRALELFLESLLKKACQVTQSRNAKTMTTSHLKQCIELEQQFDFLKDLVASVPDMQGDGEDNHVDGDKGPRRGRKPGSSGRKNGGTGSKGKDKKLSGTDSEQEDESEDTDTDGEEETPQLPPQASHPPAHFQSPPTPFIPFTSPLPLPPAPPGPSAADAEDEEDYDS.

Residues 14-77 (PARIKKIMQT…SHLKQCIELE (64 aa)) form the Histone-fold domain. The interval 91-205 (PDMQGDGEDN…DAEDEEDYDS (115 aa)) is disordered. The span at 98-108 (EDNHVDGDKGP) shows a compositional bias: basic and acidic residues. The span at 138-155 (SEQEDESEDTDTDGEEET) shows a compositional bias: acidic residues. Residues 172 to 192 (PPTPFIPFTSPLPLPPAPPGP) are compositionally biased toward pro residues. Residues 196–205 (DAEDEEDYDS) are compositionally biased toward acidic residues.

Belongs to the NC2 alpha/DRAP1 family. As to quaternary structure, heterodimer with DR1. Binds BTAF1. In terms of processing, phosphorylation reduces DNA binding, but has no effect on heterodimerization and TBP binding.

Its subcellular location is the nucleus. Functionally, the association of the DR1/DRAP1 heterodimer with TBP results in a functional repression of both activated and basal transcription of class II genes. This interaction precludes the formation of a transcription-competent complex by inhibiting the association of TFIIA and/or TFIIB with TBP. Can bind to DNA on its own. This is Dr1-associated corepressor (Drap1) from Mus musculus (Mouse).